We begin with the raw amino-acid sequence, 209 residues long: Pyridoxine/pyridoxamine 5'-phosphate oxidase (209 aa).

FMN contacts are provided by residues 57–62 (RMVLLK), 72–73 (YT), Lys-79, and Gln-101. Lys-62 is a substrate binding site. Tyr-119, Arg-123, and Ser-127 together coordinate substrate. Residues 136-137 (QS) and Trp-181 contribute to the FMN site. 187–189 (RLH) provides a ligand contact to substrate. Residue Arg-191 coordinates FMN.

Belongs to the pyridoxamine 5'-phosphate oxidase family. Homodimer. The cofactor is FMN.

It catalyses the reaction pyridoxamine 5'-phosphate + O2 + H2O = pyridoxal 5'-phosphate + H2O2 + NH4(+). It carries out the reaction pyridoxine 5'-phosphate + O2 = pyridoxal 5'-phosphate + H2O2. It participates in cofactor metabolism; pyridoxal 5'-phosphate salvage; pyridoxal 5'-phosphate from pyridoxamine 5'-phosphate: step 1/1. It functions in the pathway cofactor metabolism; pyridoxal 5'-phosphate salvage; pyridoxal 5'-phosphate from pyridoxine 5'-phosphate: step 1/1. Catalyzes the oxidation of either pyridoxine 5'-phosphate (PNP) or pyridoxamine 5'-phosphate (PMP) into pyridoxal 5'-phosphate (PLP). This Chelativorans sp. (strain BNC1) protein is Pyridoxine/pyridoxamine 5'-phosphate oxidase.